The primary structure comprises 369 residues: Glutamate 5-kinase (369 aa).

Lys-8 serves as a coordination point for ATP. Residues Ser-49, Asp-136, and Asn-148 each contribute to the substrate site. Residues 168 to 169 (TD) and 212 to 218 (TGGMMTK) each bind ATP. The region spanning 277 to 355 (TGKLYLDSGA…KEISTILGYV (79 aa)) is the PUA domain.

The protein belongs to the glutamate 5-kinase family.

Its subcellular location is the cytoplasm. It carries out the reaction L-glutamate + ATP = L-glutamyl 5-phosphate + ADP. It functions in the pathway amino-acid biosynthesis; L-proline biosynthesis; L-glutamate 5-semialdehyde from L-glutamate: step 1/2. In terms of biological role, catalyzes the transfer of a phosphate group to glutamate to form L-glutamate 5-phosphate. The chain is Glutamate 5-kinase from Trichormus variabilis (strain ATCC 29413 / PCC 7937) (Anabaena variabilis).